The chain runs to 154 residues: SsrA-binding protein (154 aa).

The protein belongs to the SmpB family.

It localises to the cytoplasm. Its function is as follows. Required for rescue of stalled ribosomes mediated by trans-translation. Binds to transfer-messenger RNA (tmRNA), required for stable association of tmRNA with ribosomes. tmRNA and SmpB together mimic tRNA shape, replacing the anticodon stem-loop with SmpB. tmRNA is encoded by the ssrA gene; the 2 termini fold to resemble tRNA(Ala) and it encodes a 'tag peptide', a short internal open reading frame. During trans-translation Ala-aminoacylated tmRNA acts like a tRNA, entering the A-site of stalled ribosomes, displacing the stalled mRNA. The ribosome then switches to translate the ORF on the tmRNA; the nascent peptide is terminated with the 'tag peptide' encoded by the tmRNA and targeted for degradation. The ribosome is freed to recommence translation, which seems to be the essential function of trans-translation. In Treponema denticola (strain ATCC 35405 / DSM 14222 / CIP 103919 / JCM 8153 / KCTC 15104), this protein is SsrA-binding protein.